Reading from the N-terminus, the 414-residue chain is 3-isopropylmalate dehydratase large subunit (414 aa).

[4Fe-4S] cluster-binding residues include Cys-295, Cys-353, and Cys-356.

It belongs to the aconitase/IPM isomerase family. LeuC type 2 subfamily. Heterodimer of LeuC and LeuD. It depends on [4Fe-4S] cluster as a cofactor.

The catalysed reaction is (2R,3S)-3-isopropylmalate = (2S)-2-isopropylmalate. It participates in amino-acid biosynthesis; L-leucine biosynthesis; L-leucine from 3-methyl-2-oxobutanoate: step 2/4. Its function is as follows. Catalyzes the isomerization between 2-isopropylmalate and 3-isopropylmalate, via the formation of 2-isopropylmaleate. The sequence is that of 3-isopropylmalate dehydratase large subunit from Pyrobaculum islandicum (strain DSM 4184 / JCM 9189 / GEO3).